The primary structure comprises 474 residues: MSPVASSRIEKDLLGTLEVPADAYYGIQTLRAVNNFRLSGVPLSHYPKLVVALAMVKQAAADANRQLGHLPEDKHAAISEACARLIRGDFHEQFVVDMIQGGAGTSTNMNANEVIANIALEAMGHTKGEYKYLHPNNDVNMAQSTNDAYPTAIRLGLLLGHDTLLASLDSLIQAFAAKGVEFAGVLKMGRTQLQDAVPMTLGQEFHAFATTLGEDLDRLRRLAPELLTEVNLGGTAIGTGINADPGYQKLAVERLAAISGQPLKPAADLIEATSDMGAFVLFSGMLKRTAVKLSKICNDLRLLSSGPRTGINEINLPPRQPGSSIMPGKVNPVIPEAVNQVAFEVIGNDLALTLAAEGGQLQLNVMEPLIAYKIFDSIRLLQRAMDMLREHCITGITANVERCHELVEHSIGLVTALNPYIGYENSTRIAKTALESGRGVLELVREEKLLDEATLADILLPENMIAPRLIPLRA.

Residues T105, S144, T145, N146, and T191 each contribute to the L-aspartate site. An SS loop region spans residues 322 to 331 (GSSIMPGKVN). S323 serves as the catalytic Proton acceptor. 2 residues coordinate L-aspartate: S324 and K329.

It belongs to the class-II fumarase/aspartase family. Aspartase subfamily. Homotetramer.

The catalysed reaction is L-aspartate = fumarate + NH4(+). It catalyses the reaction L-phenylalanine = (E)-cinnamate + NH4(+). With respect to regulation, does not require any divalent metal ion for activation of catalysis, but the activity is slightly increased in the presence of Mg(2+), Mn(2+), Ca(2+) or Co(2+). Catalyzes the reversible conversion of L-aspartate to fumarate and ammonia. Can also utilize L-phenylalanine to form cinnamic acid. Exhibits the highest specific activity towards L-phenylalanine, but catalytic efficiency is 3-fold higher with L-aspartate. In Pseudomonas aeruginosa (strain ATCC 15692 / DSM 22644 / CIP 104116 / JCM 14847 / LMG 12228 / 1C / PRS 101 / PAO1), this protein is Aspartate ammonia-lyase.